A 335-amino-acid chain; its full sequence is Pregnancy-specific beta-1-glycoprotein 11 (335 aa).

The N-terminal stretch at 1–34 (MGPLSAPPCTEHIKWKGLLLTALLLNFWNLPTTA) is a signal peptide. Residues 35-144 (QVMIEAQPPK…TGYFTFTLYL (110 aa)) form the Ig-like V-type domain. N-linked (GlcNAc...) asparagine glycosylation is found at asparagine 61, asparagine 104, and asparagine 111. Residues 127–129 (RGD) carry the Cell attachment site motif. Ig-like C2-type domains lie at 147 to 234 (PKPS…VTLN) and 242 to 317 (PRIF…TSLT). Cystine bridges form between cysteine 169–cysteine 217 and cysteine 261–cysteine 301.

Belongs to the immunoglobulin superfamily. CEA family.

The protein resides in the secreted. This Homo sapiens (Human) protein is Pregnancy-specific beta-1-glycoprotein 11 (PSG11).